The sequence spans 331 residues: tRNA-cytidine(32) 2-sulfurtransferase (331 aa).

Residues 1-33 (MNAPHMNDTAADAATLDDAAAPAGRPALTRREQ) are disordered. Over residues 8–23 (DTAADAATLDDAAAPA) the composition is skewed to low complexity. Positions 71–76 (SGGKDS) match the PP-loop motif motif. [4Fe-4S] cluster contacts are provided by Cys-146, Cys-149, and Cys-237.

This sequence belongs to the TtcA family. In terms of assembly, homodimer. Mg(2+) is required as a cofactor. Requires [4Fe-4S] cluster as cofactor.

The protein localises to the cytoplasm. It carries out the reaction cytidine(32) in tRNA + S-sulfanyl-L-cysteinyl-[cysteine desulfurase] + AH2 + ATP = 2-thiocytidine(32) in tRNA + L-cysteinyl-[cysteine desulfurase] + A + AMP + diphosphate + H(+). Its pathway is tRNA modification. In terms of biological role, catalyzes the ATP-dependent 2-thiolation of cytidine in position 32 of tRNA, to form 2-thiocytidine (s(2)C32). The sulfur atoms are provided by the cysteine/cysteine desulfurase (IscS) system. This chain is tRNA-cytidine(32) 2-sulfurtransferase, found in Burkholderia orbicola (strain MC0-3).